The sequence spans 265 residues: Aquaporin-5 (265 aa).

Over 1–12 the chain is Cytoplasmic; sequence MKKEVCSVAFFK. Residues 13–33 traverse the membrane as a helical segment; it reads AVFAEFLATLIFVFFGLGSAL. Over 34 to 39 the chain is Extracellular; the sequence is KWPSAL. A helical membrane pass occupies residues 40–60; the sequence is PTILQISIAFGLAIGTLAQAL. At 61 to 65 the chain is on the cytoplasmic side; that stretch reads GPVSG. Positions 66–74 form an intramembrane region, discontinuously helical; sequence GHINPAITL. The NPA 1 motif lies at 69-71; the sequence is NPA. Residues 75–87 are Cytoplasmic-facing; it reads ALLIGNQISLLRA. The chain crosses the membrane as a helical span at residues 88–108; sequence IFYVAAQLVGAIAGAGILYWL. The Extracellular segment spans residues 109 to 126; that stretch reads APGNARGNLAVNALSNNT. An N-linked (GlcNAc...) asparagine glycan is attached at Asn124. Residues 127 to 147 form a helical membrane-spanning segment; sequence TPGKAVVVELILTFQLALCIF. Residues 148–158 are Cytoplasmic-facing; it reads SSTDSRRTSPV. A helical membrane pass occupies residues 159–179; it reads GSPALSIGLSVTLGHLVGIYF. A topological domain (extracellular) is located at residue Thr180. Positions 181–191 form an intramembrane region, discontinuously helical; it reads GCSMNPARSFG. The NPA 2 signature appears at 185–187; sequence NPA. Topologically, residues 192 to 203 are extracellular; sequence PAVVMNRFSPSH. Residues 204-224 form a helical membrane-spanning segment; sequence WVFWVGPIVGAVLAAILYFYL. Topologically, residues 225–265 are cytoplasmic; it reads LFPSSLSLHDRVAVVKGTYEPEEDWEDHREERKKTIELTAH.

Belongs to the MIP/aquaporin (TC 1.A.8) family. Homotetramer; each monomer provides an independent water pore. Interacts with TRPV4; the interaction is probably indirect and regulates TRPV4 activation by hypotonicity. Detected at the luminal membrane of secretory epithelial cells in hindpaw sweat glands. Detected in acinar cells in salivary glands, in duct cells in lacrimal glands and in lung (at protein level). Detected in lung, parotid, submandibular, sublingual, and lacrimal gland tissues.

The protein resides in the apical cell membrane. It is found in the cell membrane. It localises to the cytoplasmic vesicle membrane. It catalyses the reaction H2O(in) = H2O(out). Aquaporins form homotetrameric transmembrane channels, with each monomer independently mediating water transport across the plasma membrane along its osmotic gradient. Plays an important role in fluid secretion in salivary glands. Required for TRPV4 activation by hypotonicity. Together with TRPV4, controls regulatory volume decrease in salivary epithelial cells. Seems to play a redundant role in water transport in the eye, lung and in sweat glands. This is Aquaporin-5 from Mus musculus (Mouse).